A 488-amino-acid chain; its full sequence is Acetyl-coenzyme A carboxylase carboxyl transferase subunit beta, chloroplastic (488 aa).

The tract at residues 189–211 (ISGSDSGSSNIRTDGNGSDIRGR) is disordered. The 265-residue stretch at 224–488 (LWVQCENCYG…LHGFFPLTQN (265 aa)) folds into the CoA carboxyltransferase N-terminal domain. Positions 228, 231, 247, and 250 each coordinate Zn(2+). A C4-type zinc finger spans residues 228 to 250 (CENCYGLNYKKFFKSKMNICEQC).

This sequence belongs to the AccD/PCCB family. In terms of assembly, acetyl-CoA carboxylase is a heterohexamer composed of biotin carboxyl carrier protein, biotin carboxylase and 2 subunits each of ACCase subunit alpha and ACCase plastid-coded subunit beta (accD). Zn(2+) is required as a cofactor.

The protein resides in the plastid. Its subcellular location is the chloroplast stroma. The catalysed reaction is N(6)-carboxybiotinyl-L-lysyl-[protein] + acetyl-CoA = N(6)-biotinyl-L-lysyl-[protein] + malonyl-CoA. The protein operates within lipid metabolism; malonyl-CoA biosynthesis; malonyl-CoA from acetyl-CoA: step 1/1. Component of the acetyl coenzyme A carboxylase (ACC) complex. Biotin carboxylase (BC) catalyzes the carboxylation of biotin on its carrier protein (BCCP) and then the CO(2) group is transferred by the transcarboxylase to acetyl-CoA to form malonyl-CoA. This chain is Acetyl-coenzyme A carboxylase carboxyl transferase subunit beta, chloroplastic, found in Liriodendron tulipifera (Tuliptree).